Consider the following 60-residue polypeptide: Large ribosomal subunit protein bL32A (60 aa).

The span at M1–Q19 shows a compositional bias: basic residues. Positions M1–K21 are disordered.

The protein belongs to the bacterial ribosomal protein bL32 family.

The sequence is that of Large ribosomal subunit protein bL32A from Nocardia farcinica (strain IFM 10152).